The chain runs to 392 residues: Chalcone synthase 1 (392 aa).

The active site involves cysteine 167.

The protein belongs to the thiolase-like superfamily. Chalcone/stilbene synthases family.

It carries out the reaction (E)-4-coumaroyl-CoA + 3 malonyl-CoA + 3 H(+) = 2',4,4',6'-tetrahydroxychalcone + 3 CO2 + 4 CoA. It participates in secondary metabolite biosynthesis; flavonoid biosynthesis. The primary product of this enzyme is 4,2',4',6'-tetrahydroxychalcone (also termed naringenin-chalcone or chalcone) which can under specific conditions spontaneously isomerize into naringenin. The chain is Chalcone synthase 1 (CHS1) from Secale cereale (Rye).